The chain runs to 147 residues: Hemoglobin subunit beta-1/2 (147 aa).

V2 is modified (N-acetylvaline). The 145-residue stretch at 3–147 (HLSSEEKSAV…VANALAHKYH (145 aa)) folds into the Globin domain. T13 carries the post-translational modification Phosphothreonine. S45 is subject to Phosphoserine. N6-acetyllysine is present on K60. H64 serves as a coordination point for heme b. K83 is modified (N6-acetyllysine). Heme b is bound at residue H93. C94 carries the post-translational modification S-nitrosocysteine. Residue K145 is modified to N6-acetyllysine.

Belongs to the globin family. As to quaternary structure, heterotetramer of two alpha chains and two beta chains. In terms of tissue distribution, red blood cells.

In terms of biological role, involved in oxygen transport from the lung to the various peripheral tissues. This Oryctolagus cuniculus (Rabbit) protein is Hemoglobin subunit beta-1/2 (HBB1).